Reading from the N-terminus, the 135-residue chain is Galectin-1 (135 aa).

At Ala2 the chain carries N-acetylalanine. Residues Gly4 to Glu135 enclose the Galectin domain. An N6-acetyllysine mark is found at Lys13 and Lys29. Residue Ser30 is modified to Phosphoserine. A beta-D-galactoside-binding positions include His45–Arg49, His53, Asn62, and Trp69–Glu72. Lys108 is modified (N6-acetyllysine; alternate). N6-succinyllysine; alternate is present on Lys108. An N6-acetyllysine modification is found at Lys128.

In terms of assembly, homodimer. Binds LGALS3BP. Interacts with CD2, CD3, CD4, CD6, CD7, CD43, ALCAM and CD45. Interacts with laminin (via poly-N-acetyllactosamine). Interacts with SUSD2. Interacts with cargo receptor TMED10; the interaction mediates the translocation from the cytoplasm into the ERGIC (endoplasmic reticulum-Golgi intermediate compartment) and thereby secretion.

Its subcellular location is the secreted. The protein resides in the extracellular space. The protein localises to the extracellular matrix. It is found in the cytoplasm. Lectin that binds beta-galactoside and a wide array of complex carbohydrates. Plays a role in regulating apoptosis, cell proliferation and cell differentiation. Inhibits CD45 protein phosphatase activity and therefore the dephosphorylation of Lyn kinase. Strong inducer of T-cell apoptosis. The protein is Galectin-1 (LGALS1) of Ovis aries (Sheep).